The sequence spans 136 residues: Small ribosomal subunit protein bS16 (136 aa).

The protein belongs to the bacterial ribosomal protein bS16 family.

This Pseudarthrobacter chlorophenolicus (strain ATCC 700700 / DSM 12829 / CIP 107037 / JCM 12360 / KCTC 9906 / NCIMB 13794 / A6) (Arthrobacter chlorophenolicus) protein is Small ribosomal subunit protein bS16.